The sequence spans 383 residues: Succinyl-diaminopimelate desuccinylase (383 aa).

A Zn(2+)-binding site is contributed by histidine 73. Aspartate 75 is a catalytic residue. Position 107 (aspartate 107) interacts with Zn(2+). Glutamate 141 functions as the Proton acceptor in the catalytic mechanism. Glutamate 142, glutamate 170, and histidine 356 together coordinate Zn(2+).

It belongs to the peptidase M20A family. DapE subfamily. As to quaternary structure, homodimer. It depends on Zn(2+) as a cofactor. The cofactor is Co(2+).

It carries out the reaction N-succinyl-(2S,6S)-2,6-diaminopimelate + H2O = (2S,6S)-2,6-diaminopimelate + succinate. The protein operates within amino-acid biosynthesis; L-lysine biosynthesis via DAP pathway; LL-2,6-diaminopimelate from (S)-tetrahydrodipicolinate (succinylase route): step 3/3. Its function is as follows. Catalyzes the hydrolysis of N-succinyl-L,L-diaminopimelic acid (SDAP), forming succinate and LL-2,6-diaminopimelate (DAP), an intermediate involved in the bacterial biosynthesis of lysine and meso-diaminopimelic acid, an essential component of bacterial cell walls. The protein is Succinyl-diaminopimelate desuccinylase of Pseudomonas putida (strain ATCC 700007 / DSM 6899 / JCM 31910 / BCRC 17059 / LMG 24140 / F1).